The primary structure comprises 247 residues: DNA polymerase sliding clamp (247 aa).

Belongs to the PCNA family. Homotrimer. The subunits circularize to form a toroid; DNA passes through its center. Replication factor C (RFC) is required to load the toroid on the DNA.

Its function is as follows. Sliding clamp subunit that acts as a moving platform for DNA processing. Responsible for tethering the catalytic subunit of DNA polymerase and other proteins to DNA during high-speed replication. This is DNA polymerase sliding clamp from Methanoregula boonei (strain DSM 21154 / JCM 14090 / 6A8).